The primary structure comprises 255 residues: ParA family protein CT_582 (255 aa).

It belongs to the ParA family.

This Chlamydia trachomatis serovar D (strain ATCC VR-885 / DSM 19411 / UW-3/Cx) protein is ParA family protein CT_582.